The following is a 61-amino-acid chain: Large ribosomal subunit protein bL32 (61 aa).

Residues 1 to 16 (MAVPKRKTSPSRRGMR) are compositionally biased toward basic residues. Residues 1–61 (MAVPKRKTSP…RQILKPKAEA (61 aa)) form a disordered region. The segment covering 28-44 (VEDKDSGELRRPHHLDL) has biased composition (basic and acidic residues).

The protein belongs to the bacterial ribosomal protein bL32 family.

This is Large ribosomal subunit protein bL32 from Xanthobacter autotrophicus (strain ATCC BAA-1158 / Py2).